Consider the following 173-residue polypeptide: Cytochrome c-type biogenesis protein CcmE (173 aa).

At 1 to 8 the chain is on the cytoplasmic side; that stretch reads MMSRKKRR. A helical; Signal-anchor for type II membrane protein transmembrane segment spans residues 9-29; that stretch reads LWIVIACGIGLSTAVALMLFA. The Periplasmic portion of the chain corresponds to 30–173; it reads FRSSLSFFMS…PAQIEASNNG (144 aa). Heme is bound by residues histidine 127 and tyrosine 131. The disordered stretch occupies residues 145 to 173; the sequence is KWNPKFGPPPNAGAWDDKSPAQIEASNNG.

This sequence belongs to the CcmE/CycJ family.

It is found in the cell inner membrane. In terms of biological role, heme chaperone required for the biogenesis of c-type cytochromes. Transiently binds heme delivered by CcmC and transfers the heme to apo-cytochromes in a process facilitated by CcmF and CcmH. The sequence is that of Cytochrome c-type biogenesis protein CcmE from Acidiphilium cryptum (strain JF-5).